Here is a 510-residue protein sequence, read N- to C-terminus: MSVIRALHRQLVTKERSAEEIAREYLERLAQLEPQLKSFITVTEELALQQARAVDARIRAGEAIGPLAGIPLAVKDNLCTQGIRTTCASRMLEGFIPPYESTVTARLAAAGMVTVGKTNLDEFAMGSSTENSAFQRTANPWDLTRVPGGSSGGSAAAVAADQAVVALGSDTGGSIRQPAAFCGVVGLKPTYGLVSRYGLVAFASSLDQVGPFGRTVEDVALLLQGIAGHDPMDSTSLKVDIPDYSQALIPDIKGFKIGVIRDLLGEGCGEETRAAVQAAIQHLQELGAEILEIDCPSFRYGLATYYIIAPSEASANLARYDGVKYGLREPADSLLSMYGKTRAHGFGPEVKRRIMIGTYALSSGYYDAYYLKAQKVRTLIKQDFLKAFEKVDVLVSPTTPTPAFKLGEREDPLSMYLCDLMTIPVNLAGLPGLSLPCGFADGLPIGLQIVGNALQESKVLRVAYAYEQSTDWHKRRPPLGQPSVKEGQGSDPGQPQAKRRSGKRSKKSKS.

Active-site charge relay system residues include K75 and S150. Residue S174 is the Acyl-ester intermediate of the active site. Residues 471 to 510 (DWHKRRPPLGQPSVKEGQGSDPGQPQAKRRSGKRSKKSKS) form a disordered region. Positions 497-510 (AKRRSGKRSKKSKS) are enriched in basic residues.

Belongs to the amidase family. GatA subfamily. Heterotrimer of A, B and C subunits.

The catalysed reaction is L-glutamyl-tRNA(Gln) + L-glutamine + ATP + H2O = L-glutaminyl-tRNA(Gln) + L-glutamate + ADP + phosphate + H(+). In terms of biological role, allows the formation of correctly charged Gln-tRNA(Gln) through the transamidation of misacylated Glu-tRNA(Gln) in organisms which lack glutaminyl-tRNA synthetase. The reaction takes place in the presence of glutamine and ATP through an activated gamma-phospho-Glu-tRNA(Gln). The protein is Glutamyl-tRNA(Gln) amidotransferase subunit A of Synechococcus sp. (strain JA-2-3B'a(2-13)) (Cyanobacteria bacterium Yellowstone B-Prime).